The sequence spans 623 residues: ATP-dependent zinc metalloprotease FtsH (623 aa).

Topologically, residues 1-7 (MNQSFWR) are cytoplasmic. A helical membrane pass occupies residues 8–28 (PLFAILLFMLVFHLTNIFFAQ). The Periplasmic portion of the chain corresponds to 29-117 (QGAQVAQISY…EVSALSTETP (89 aa)). The helical transmembrane segment at 118 to 138 (LLLNALIYVAPWVILIAIWWV) threads the bilayer. The Cytoplasmic portion of the chain corresponds to 139–623 (GMRSMRSQGP…SLNTAQAPPP (485 aa)). 214-221 (GPPGTGKT) contributes to the ATP binding site. Histidine 435 is a Zn(2+) binding site. The active site involves glutamate 436. Zn(2+)-binding residues include histidine 439 and aspartate 511.

In the central section; belongs to the AAA ATPase family. The protein in the C-terminal section; belongs to the peptidase M41 family. In terms of assembly, homohexamer. The cofactor is Zn(2+).

The protein localises to the cell inner membrane. Acts as a processive, ATP-dependent zinc metallopeptidase for both cytoplasmic and membrane proteins. Plays a role in the quality control of integral membrane proteins. The sequence is that of ATP-dependent zinc metalloprotease FtsH from Pelobacter propionicus (strain DSM 2379 / NBRC 103807 / OttBd1).